A 686-amino-acid chain; its full sequence is Acyl-CoA synthetase short-chain family member 3, mitochondrial (686 aa).

The transit peptide at 1–29 directs the protein to the mitochondrion; it reads MKPSWLQCHKVTSAGGLGGPLPGSSPARG. A CoA-binding site is contributed by 227–230; it reads EPGR. Residues 425–427 and 446–451 contribute to the ATP site; these read GER and DHWWQT. Lys518 carries the post-translational modification N6-succinyllysine. At Lys524 the chain carries N6-acetyllysine. ATP-binding residues include Asp539, Arg554, and Arg565. A CoA-binding site is contributed by Arg624.

The protein belongs to the ATP-dependent AMP-binding enzyme family.

The protein localises to the mitochondrion matrix. It catalyses the reaction acetate + ATP + CoA = acetyl-CoA + AMP + diphosphate. It carries out the reaction propanoate + ATP + CoA = propanoyl-CoA + AMP + diphosphate. The catalysed reaction is butanoate + ATP + CoA = butanoyl-CoA + AMP + diphosphate. Catalyzes the synthesis of acetyl-CoA from short-chain fatty acids. Propionate is the preferred substrate but can also utilize acetate and butyrate with a much lower affinity. The polypeptide is Acyl-CoA synthetase short-chain family member 3, mitochondrial (ACSS3) (Pongo abelii (Sumatran orangutan)).